A 67-amino-acid chain; its full sequence is Arasin 2 (67 aa).

Positions 1–25 (MERRTLLVVLLVCSCVVAAAAEASP) are cleaved as a signal peptide. The interval 22–44 (EASPSRWPSPGRPRPFPGRPNPI) is disordered. Residues 31–44 (PGRPRPFPGRPNPI) show a composition bias toward pro residues. 2 cysteine pairs are disulfide-bonded: cysteine 50–cysteine 59 and cysteine 52–cysteine 57.

In terms of assembly, interacts with chitin through the N-terminal region (26-48). This interaction may be important, since chitin is a component of the fungal cell wall, as well as of the crab exoskeleton (permitting a possible action of arasin in wound healing in case of lesions). Post-translationally, disulfide bonds are important for activity especially against Gram-negative bacteria, since the linearization of the peptide causes a strong decrease of activity on these bacteria. In terms of tissue distribution, mainly expressed in hemocytes. No or very low expression in heart, gills, inestines, and epidermis.

Its function is as follows. Antimicrobial peptide that has a large activity spectrum with activity against Gram-positive, Gram-negative bacteria, as well as against fungi. Shows activity at micromolar concentrations. Displays minimal inhibitory concentration (MIC) values lower than minimal bactericidal concentrations (MBC). May have a dual mode of action depending on the peptide concentrations. At MIC concentrations, the peptide penetrates into the cytoplasm of target cells (tested on the Gram-negative E.coli). The two inner membrane proteins YgdD and SbmA may be required for this uptake. At concentrations higher than MIC, arasin may act by disrupting membranes. Does not show hemolytic activity. In Hyas araneus (Atlantic lyre crab), this protein is Arasin 2.